We begin with the raw amino-acid sequence, 554 residues long: MFMATDVEIAQKAKLEKISVIAEKMGLTEEDYEQYGRYKAKLDLNLFEKNKDKKDGKLILMTSINPTPTGEGKTTMNVGLAMGLNKIGKNAISVLREPSLGPNFGMKGGAAGGGYAQVVPMDEINMHFTGDFHAITTANNLICAMMDNHIHQGNALNIDPKQILIKRCMDMNERELRDIIIGVGAKGNGVMRQDGFEITVASEIMAILCLAKDLKDLKERVGNILIAFDKEGKPVYARDVKADGAVALVMKEAIKPNLVQTLEHTPAIIHGGPFANIAHGCNSLIATKLGLKLGDYVVTEAGFGADLGAEKFFDIKCRNDLHPNMVCIVATIKALKHHGEAEDFKVENVEALEKGYANLKRHIENMKKYKVPVVVAINRFATDTDAEIKKLTELVEADGTRAIFCDVWAKGGEGAKELAEYVVENTKEENDFEFLYDLELPIKEKIEKIAKEIYRADGVEFSAKAKKKLKQIKELGLDNYPVCMAKTQYSFSDNKKLIGAPTGFTITVSDFKISRGAGFVVALLGSVMTMPGLPKVPSAENCDVLDDGTVVGLF.

T67–T74 serves as a coordination point for ATP.

It belongs to the formate--tetrahydrofolate ligase family.

It carries out the reaction (6S)-5,6,7,8-tetrahydrofolate + formate + ATP = (6R)-10-formyltetrahydrofolate + ADP + phosphate. It participates in one-carbon metabolism; tetrahydrofolate interconversion. This Finegoldia magna (strain ATCC 29328 / DSM 20472 / WAL 2508) (Peptostreptococcus magnus) protein is Formate--tetrahydrofolate ligase.